A 202-amino-acid chain; its full sequence is Small ribosomal subunit protein uS4 (202 aa).

A compositionally biased stretch (basic residues) spans 1–13 (MSRYRGPRLRVTR). The tract at residues 1–42 (MSRYRGPRLRVTRRLGELPGLTRKASKKSNPPGQHGQARRKR) is disordered. Positions 90-152 (NRLDNVCFRL…KASKKLVEGN (63 aa)) constitute an S4 RNA-binding domain.

Belongs to the universal ribosomal protein uS4 family. As to quaternary structure, part of the 30S ribosomal subunit. Contacts protein S5. The interaction surface between S4 and S5 is involved in control of translational fidelity.

In terms of biological role, one of the primary rRNA binding proteins, it binds directly to 16S rRNA where it nucleates assembly of the body of the 30S subunit. Its function is as follows. With S5 and S12 plays an important role in translational accuracy. In Prochlorococcus marinus (strain MIT 9515), this protein is Small ribosomal subunit protein uS4.